Reading from the N-terminus, the 241-residue chain is MEAAADGPAETQSPVEKDSPAKTQSPAQDTSIMSRNNADTGRVLALPEHKKKRKGNLPAESVKILRDWMYKHRFKAYPSEEEKQMLSEKTNLSLLQISNWFINARRRILPDMLQQRRNDPIIGHKTGKDAHATHLQSTEASVPAKSGPSGPDNVQSLPLWPLPKGQMSREKQPDPESAPSQKLTGIAQPKKKVKVSVTSPSSPELVSPEEHADFSSFLLLVDAAVQRAAELELEKKQEPNP.

Disordered stretches follow at residues 1–58 (MEAA…GNLP) and 126–210 (TGKD…SPEE). Positions 21-39 (AKTQSPAQDTSIMSRNNAD) are enriched in polar residues. Residues 48–111 (EHKKKRKGNL…INARRRILPD (64 aa)) constitute a DNA-binding region (homeobox; TALE-type). The span at 195 to 206 (VSVTSPSSPELV) shows a compositional bias: low complexity.

The protein belongs to the TALE/TGIF homeobox family. In terms of tissue distribution, specifically expressed in adult testis.

It localises to the nucleus. Its function is as follows. May have a transcription role in testis. The sequence is that of Homeobox protein TGIF2LX (TGIF2LX) from Homo sapiens (Human).